A 455-amino-acid polypeptide reads, in one-letter code: Oxysterols receptor LXR-beta (455 aa).

Residues 1–10 (MSTPTTNSVD) are compositionally biased toward polar residues. The interval 1–53 (MSTPTTNSVDTPLPGNGPSTPSSSPGGKEDGPEPCPGGADPDVPSTDGADSAS) is disordered. Residues 1–80 (MSTPTTNSVD…GPAPKMLGDE (80 aa)) form a transactivation AF-1; required for ligand-independent transactivation function region. The span at 14–26 (PGNGPSTPSSSPG) shows a compositional bias: low complexity. A DNA-binding region (nuclear receptor) is located at residues 79-156 (DELCQVCGDT…AGMREQCVLS (78 aa)). 2 NR C4-type zinc fingers span residues 82–102 (CQVCGDTASGFHYNVLSCEGC) and 120–144 (CRGGGTCQMDAFMRRKCQQCRLRKC). A disordered region spans residues 164 to 210 (KIRKQQQQQQQQSSPTGPGVSSSSPASGPGASPGGSDGGGQGSGEGE). Positions 168-193 (QQQQQQQQSSPTGPGVSSSSPASGPG) are enriched in low complexity. Over residues 194–210 (ASPGGSDGGGQGSGEGE) the composition is skewed to gly residues. Residues 214–455 (LTAAQELMIQ…LLSEIWDVHE (242 aa)) are transactivation AF-2; required for ligand-dependent transactivation function; mediates interaction with CCAR2. The NR LBD domain occupies 217–455 (AQELMIQQLV…LLSEIWDVHE (239 aa)). Glycyl lysine isopeptide (Lys-Gly) (interchain with G-Cter in SUMO2) cross-links involve residues lysine 404 and lysine 442.

It belongs to the nuclear hormone receptor family. NR1 subfamily. As to quaternary structure, forms a heterodimer with RXR. Interacts with CCAR2 (via N-terminus) in a ligand-independent manner. Interacts (when sumoylated) with GPS2; interaction with GPS2 onto hepatic acute phase protein promoters prevents N-Cor corepressor complex dissociation. Interacts with ABCA12 and ABCA1; this interaction is required for ABCA1 localization to the cell surface and is necessary for its normal activity and stability. In terms of processing, sumoylated by SUMO2 at Lys-404 and Lys-442 during the hepatic acute phase response, leading to promote interaction with GPS2 and prevent N-Cor corepressor complex dissociation.

It localises to the nucleus. Its function is as follows. Nuclear receptor that exhibits a ligand-dependent transcriptional activation activity. Binds preferentially to double-stranded oligonucleotide direct repeats having the consensus half-site sequence 5'-AGGTCA-3' and 4-nt spacing (DR-4). Regulates cholesterol uptake through MYLIP-dependent ubiquitination of LDLR, VLDLR and LRP8; DLDLR and LRP8. Interplays functionally with RORA for the regulation of genes involved in liver metabolism. Induces LPCAT3-dependent phospholipid remodeling in endoplasmic reticulum (ER) membranes of hepatocytes, driving SREBF1 processing and lipogenesis. Via LPCAT3, triggers the incorporation of arachidonate into phosphatidylcholines of ER membranes, increasing membrane dynamics and enabling triacylglycerols transfer to nascent very low-density lipoprotein (VLDL) particles. Via LPCAT3 also counteracts lipid-induced ER stress response and inflammation, likely by modulating SRC kinase membrane compartmentalization and limiting the synthesis of lipid inflammatory mediators. Plays an anti-inflammatory role during the hepatic acute phase response by acting as a corepressor: inhibits the hepatic acute phase response by preventing dissociation of the N-Cor corepressor complex. The chain is Oxysterols receptor LXR-beta (NR1H2) from Bos taurus (Bovine).